The chain runs to 208 residues: Ribosomal RNA small subunit methyltransferase G (208 aa).

Residues Gly75, Leu80, 126-127 (VE), and Arg141 contribute to the S-adenosyl-L-methionine site.

The protein belongs to the methyltransferase superfamily. RNA methyltransferase RsmG family.

Its subcellular location is the cytoplasm. It carries out the reaction guanosine(527) in 16S rRNA + S-adenosyl-L-methionine = N(7)-methylguanosine(527) in 16S rRNA + S-adenosyl-L-homocysteine. Specifically methylates the N7 position of guanine in position 527 of 16S rRNA. This chain is Ribosomal RNA small subunit methyltransferase G, found in Marinomonas sp. (strain MWYL1).